A 448-amino-acid chain; its full sequence is Tubulin alpha-4A chain (448 aa).

Residues 1–4 (MREC) carry the MREC motif motif. Gln-11 contributes to the GTP binding site. An N6-acetyllysine modification is found at Lys-40. Position 48 is a phosphoserine (Ser-48). Glu-71 contacts GTP. Position 71 (Glu-71) interacts with Mg(2+). 3'-nitrotyrosine is present on Tyr-83. 6 residues coordinate GTP: Ser-140, Gly-144, Thr-145, Thr-179, Asn-206, and Asn-228. Glu-254 is a catalytic residue. Tyr-432 bears the Phosphotyrosine mark. Ser-439 is subject to Phosphoserine.

This sequence belongs to the tubulin family. In terms of assembly, dimer of alpha and beta chains. A typical microtubule is a hollow water-filled tube with an outer diameter of 25 nm and an inner diameter of 15 nM. Alpha-beta heterodimers associate head-to-tail to form protofilaments running lengthwise along the microtubule wall with the beta-tubulin subunit facing the microtubule plus end conferring a structural polarity. Microtubules usually have 13 protofilaments but different protofilament numbers can be found in some organisms and specialized cells. Interacts with CFAP157. Mg(2+) is required as a cofactor. In terms of processing, some glutamate residues at the C-terminus are polyglycylated, resulting in polyglycine chains on the gamma-carboxyl group. Glycylation is mainly limited to tubulin incorporated into axonemes (cilia and flagella) whereas glutamylation is prevalent in neuronal cells, centrioles, axonemes, and the mitotic spindle. Both modifications can coexist on the same protein on adjacent residues, and lowering polyglycylation levels increases polyglutamylation, and reciprocally. Cilia and flagella glycylation is required for their stability and maintenance. Flagella glycylation controls sperm motility. Post-translationally, some glutamate residues at the C-terminus are polyglutamylated, resulting in polyglutamate chains on the gamma-carboxyl group. Polyglutamylation plays a key role in microtubule severing by spastin (SPAST). SPAST preferentially recognizes and acts on microtubules decorated with short polyglutamate tails: severing activity by SPAST increases as the number of glutamates per tubulin rises from one to eight, but decreases beyond this glutamylation threshold. Glutamylation is also involved in cilia motility. Acetylation of alpha chains at Lys-40 is located inside the microtubule lumen. This modification has been correlated with increased microtubule stability, intracellular transport and ciliary assembly. In terms of processing, methylation of alpha chains at Lys-40 is found in mitotic microtubules and is required for normal mitosis and cytokinesis contributing to genomic stability. Post-translationally, although this tubulin does not encode a C-terminal tyrosine, a C-terminal tyrosine can be added post-translationally by the tubulin tyrosine ligase (TTL). It can then undergo a detyrosination cycle by the tubulin tyrosine carboxypeptidase (MATCAP1/KIAA0895L).

Its subcellular location is the cytoplasm. The protein localises to the cytoskeleton. It catalyses the reaction GTP + H2O = GDP + phosphate + H(+). In terms of biological role, tubulin is the major constituent of microtubules, a cylinder consisting of laterally associated linear protofilaments composed of alpha- and beta-tubulin heterodimers. Microtubules grow by the addition of GTP-tubulin dimers to the microtubule end, where a stabilizing cap forms. Below the cap, tubulin dimers are in GDP-bound state, owing to GTPase activity of alpha-tubulin. The polypeptide is Tubulin alpha-4A chain (TUBA4A) (Macaca fascicularis (Crab-eating macaque)).